A 504-amino-acid polypeptide reads, in one-letter code: Transcriptional coactivator YAP1 (504 aa).

Composition is skewed to pro residues over residues 1–12 (MDPGQQPPPQPA) and 20–36 (PSQP…PGQP). The tract at residues 1–59 (MDPGQQPPPQPAPQGQGQPPSQPPQGQGPPSGPGQPAPAATQAAPQAPPAGHQIVHVRG) is disordered. The span at 37–51 (APAATQAAPQAPPAG) shows a compositional bias: low complexity. Serine 61 is subject to Phosphoserine; by LATS1 and LATS2. Position 63 is a phosphothreonine (threonine 63). Residues 86–100 (MRLRKLPDSFFKPPE) are a coiled coil. Lysine 90 carries the post-translational modification N6-lactoyllysine. Positions 91–114 (LPDSFFKPPEPKSHSRQASTDAGT) are disordered. Position 105 is a phosphoserine (serine 105). A Phosphoserine; by LATS1 and LATS2 modification is found at serine 109. Threonine 110 bears the Phosphothreonine mark. Phosphothreonine; by MAPK8 and MAPK9 is present on threonine 119. Residue serine 127 is modified to Phosphoserine; by LATS1 and LATS2. 2 positions are modified to phosphoserine: serine 128 and serine 131. Residues 133 to 158 (QLGAVSPGTLTPTGVVSGPAATPTAQ) form a disordered region. Serine 138 carries the phosphoserine; by MAPK8 and MAPK9 modification. Threonine 154 bears the Phosphothreonine; by MAPK8 and MAPK9 mark. At serine 164 the chain carries Phosphoserine; by LATS1 and LATS2. WW domains are found at residues 171–204 (VPLP…DPRK) and 230–263 (GPLP…DPRL). Phosphoserine is present on residues serine 274 and serine 289. 2 disordered regions span residues 275-309 (QSAP…MRLQ) and 355-407 (LEQD…MSSY). A transactivation domain region spans residues 291–504 (QGGVMGGSNS…LDKESFLTWL (214 aa)). The stretch at 298–359 (SNSNQQQQMR…SQLPTLEQDG (62 aa)) forms a coiled coil. Residues 355–391 (LEQDGGTQNPVSSPGMSQELRTMTTNSSDPFLNSGTY) show a composition bias toward polar residues. Position 367 is a phosphoserine; by MAPK8 and MAPK9 (serine 367). Residues serine 371, serine 381, serine 382, and serine 388 each carry the phosphoserine modification. Serine 397 bears the Phosphoserine; by LATS1 and LATS2 mark. A phosphoserine; by CK1 mark is found at serine 400 and serine 403. Tyrosine 407 carries the post-translational modification Phosphotyrosine; by ABL1. Position 412 is a phosphothreonine; by MAPK8 and MAPK9 (threonine 412).

The protein belongs to the YAP1 family. As to quaternary structure, part of a complex when phosphorylated that contains DSG3, PKP1, YAP1 and YWHAG; the complex is required for localization of DSG3 and YAP1 to the cell membrane in keratinocytes. Binds to the SH3 domain of the YES kinase. Binds to WBP1 and WBP2. Binds, in vitro, through the WW1 domain, to neural isoforms of ENAH that contain the PPSY motif. The phosphorylated form interacts with YWHAB. Interacts (via WW domains) with LATS1 (via PPxY motif 2). Interacts with LATS2. Interacts with TEAD1, TEAD2, TEAD3 and TEAD4. Interacts with TP73. Interacts with RUNX1. Interacts with HCK. Interacts (via WW domains) with PTPN14 (via PPxY motif 2); this interaction leads to the cytoplasmic sequestration of YAP1 and inhibits its transcriptional coactivator activity. Interacts (when phosphorylated at Ser-127) with SMAD2, SMAD3 and WWTR1. Interacts with PRRG2 (via cytoplasmic domain). Interacts (via WW domains) with PRRG4 (via cytoplasmic domain). Interacts (phosphorylated) with CLDN18; the interaction sequesters YAP1 away from the nucleus and thereby restricts transcription of YAP1 target genes. Interacts with SMAD1. Interacts with AMOTL2, the interaction is required for ubiquitination of AMOTL2 and localization of YAP1 to tight junctions. Interacts with AMOT isoform 1; the interaction facilitates translocation of YAP1 to the cytoplasm and tight junctions. In terms of assembly, interacts (via WW domain 1) with isoform 3 of ERBB4 (via PPxY motif 2). Phosphorylated by LATS1 and LATS2; leading to cytoplasmic translocation and inactivation. Phosphorylated by ABL1; leading to YAP1 stabilization, enhanced interaction with TP73 and recruitment onto proapoptotic genes; in response to DNA damage. Phosphorylation at Ser-400 and Ser-403 by CK1 is triggered by previous phosphorylation at Ser-397 by LATS proteins and leads to YAP1 ubiquitination by SCF(beta-TRCP) E3 ubiquitin ligase and subsequent degradation. Phosphorylated at Thr-119, Ser-138, Thr-154, Ser-367 and Thr-412 by MAPK8/JNK1 and MAPK9/JNK2, which is required for the regulation of apoptosis by YAP1. Phosphorylated in the nucleus by PRP4K; phosphorylation leads to nuclear exclusion. In terms of processing, lactylation by AARS1 promotes nuclear localization and stabilization of YAP1, leading to increased Hippo signaling pathway. Delactylated by SIRT1. Post-translationally, ubiquitinated by SCF(beta-TRCP) E3 ubiquitin ligase. In terms of tissue distribution, increased expression seen in some liver and prostate cancers. Isoforms lacking the transactivation domain found in striatal neurons of patients with Huntington disease (at protein level).

It is found in the cytoplasm. The protein resides in the nucleus. The protein localises to the cell junction. It localises to the tight junction. Its subcellular location is the cell membrane. In terms of biological role, transcriptional regulator with dual roles as a coactivator and corepressor. Critical downstream regulatory target in the Hippo signaling pathway, crucial for organ size control and tumor suppression by restricting proliferation and promoting apoptosis. The Hippo signaling pathway core involves a kinase cascade featuring STK3/MST2 and STK4/MST1, along with its regulatory partner SAV1, which phosphorylates and activates LATS1/2 in complex with their regulatory protein, MOB1. This activation leads to the phosphorylation and inactivation of the YAP1 oncoprotein and WWTR1/TAZ. Phosphorylation of YAP1 by LATS1/2 prevents its nuclear translocation, thereby regulating the expression of its target genes. The transcriptional regulation of gene expression requires TEAD transcription factors and modulates cell growth, anchorage-independent growth, and induction of epithelial-mesenchymal transition (EMT). Plays a key role in tissue tension and 3D tissue shape by regulating the cortical actomyosin network, acting via ARHGAP18, a Rho GTPase activating protein that suppresses F-actin polymerization. It also suppresses ciliogenesis by acting as a transcriptional corepressor of TEAD4 target genes AURKA and PLK1. In conjunction with WWTR1, regulates TGFB1-dependent SMAD2 and SMAD3 nuclear accumulation. Synergizes with WBP2 to enhance PGR activity. Activates the C-terminal fragment (CTF) of ERBB4 (isoform 3). This chain is Transcriptional coactivator YAP1, found in Homo sapiens (Human).